Reading from the N-terminus, the 213-residue chain is Large ribosomal subunit protein uL3 (213 aa).

This sequence belongs to the universal ribosomal protein uL3 family. As to quaternary structure, part of the 50S ribosomal subunit. Forms a cluster with proteins L14 and L19.

One of the primary rRNA binding proteins, it binds directly near the 3'-end of the 23S rRNA, where it nucleates assembly of the 50S subunit. This Bifidobacterium adolescentis (strain ATCC 15703 / DSM 20083 / NCTC 11814 / E194a) protein is Large ribosomal subunit protein uL3.